We begin with the raw amino-acid sequence, 499 residues long: Bifunctional purine biosynthesis protein PurH (499 aa).

The MGS-like domain maps to 1–144 (MIKRALISVF…KNFKDVVVLT (144 aa)).

Belongs to the PurH family.

It carries out the reaction (6R)-10-formyltetrahydrofolate + 5-amino-1-(5-phospho-beta-D-ribosyl)imidazole-4-carboxamide = 5-formamido-1-(5-phospho-D-ribosyl)imidazole-4-carboxamide + (6S)-5,6,7,8-tetrahydrofolate. The enzyme catalyses IMP + H2O = 5-formamido-1-(5-phospho-D-ribosyl)imidazole-4-carboxamide. It functions in the pathway purine metabolism; IMP biosynthesis via de novo pathway; 5-formamido-1-(5-phospho-D-ribosyl)imidazole-4-carboxamide from 5-amino-1-(5-phospho-D-ribosyl)imidazole-4-carboxamide (10-formyl THF route): step 1/1. Its pathway is purine metabolism; IMP biosynthesis via de novo pathway; IMP from 5-formamido-1-(5-phospho-D-ribosyl)imidazole-4-carboxamide: step 1/1. This is Bifunctional purine biosynthesis protein PurH from Clostridium botulinum (strain Kyoto / Type A2).